The sequence spans 501 residues: Putative antiporter subunit mnhD2 (501 aa).

A run of 14 helical transmembrane segments spans residues 4–24 (SNLL…LVFI), 33–53 (IFSI…LIYV), 79–99 (LSLL…AYGF), 109–129 (YYLP…FLTA), 131–151 (LFNI…LITL), 162–182 (IIYV…VGLL), 207–227 (IVIV…LVLF), 245–265 (FAAL…TLIF), 274–294 (PLLV…VLAY), 309–329 (IGFI…GAIF), 334–354 (DIVV…ITGL), 369–389 (FFGV…PFSG), 409–429 (LALM…IFFV), and 452–472 (NLIG…PLLF).

The protein belongs to the CPA3 antiporters (TC 2.A.63) subunit D family. May form a heterooligomeric complex that consists of seven subunits: mnhA2, mnhB2, mnhC2, mnhD2, mnhE2, mnhF2 and mnhG2.

It is found in the cell membrane. The protein is Putative antiporter subunit mnhD2 (mnhD2) of Staphylococcus saprophyticus subsp. saprophyticus (strain ATCC 15305 / DSM 20229 / NCIMB 8711 / NCTC 7292 / S-41).